A 303-amino-acid polypeptide reads, in one-letter code: N-acetyl-D-glucosamine kinase (303 aa).

Residues 4–11 (GFDIGGTK) and 133–140 (GVGGGLVL) contribute to the ATP site. Residues His157, Cys177, Cys179, and Cys184 each coordinate Zn(2+).

This sequence belongs to the ROK (NagC/XylR) family. NagK subfamily.

The catalysed reaction is N-acetyl-D-glucosamine + ATP = N-acetyl-D-glucosamine 6-phosphate + ADP + H(+). The protein operates within cell wall biogenesis; peptidoglycan recycling. Its function is as follows. Catalyzes the phosphorylation of N-acetyl-D-glucosamine (GlcNAc) derived from cell-wall degradation, yielding GlcNAc-6-P. The protein is N-acetyl-D-glucosamine kinase of Citrobacter koseri (strain ATCC BAA-895 / CDC 4225-83 / SGSC4696).